Consider the following 211-residue polypeptide: Small ribosomal subunit protein uS3 (211 aa).

The region spanning 38–106 is the KH type-2 domain; the sequence is LRKFIKKAFY…NIELNIIEVK (69 aa).

This sequence belongs to the universal ribosomal protein uS3 family. In terms of assembly, part of the 30S ribosomal subunit. Forms a tight complex with proteins S10 and S14.

Binds the lower part of the 30S subunit head. Binds mRNA in the 70S ribosome, positioning it for translation. This Ehrlichia canis (strain Jake) protein is Small ribosomal subunit protein uS3.